Reading from the N-terminus, the 462-residue chain is Cysteine--tRNA ligase (462 aa).

Cysteine 28 is a binding site for Zn(2+). A 'HIGH' region motif is present at residues 30 to 40; sequence VTIYDLCHIGH. Residues cysteine 211, histidine 236, and glutamate 240 each contribute to the Zn(2+) site. The short motif at 268 to 272 is the 'KMSKS' region element; that stretch reads KMSKS. Lysine 271 is a binding site for ATP.

Belongs to the class-I aminoacyl-tRNA synthetase family. Monomer. The cofactor is Zn(2+).

It is found in the cytoplasm. The catalysed reaction is tRNA(Cys) + L-cysteine + ATP = L-cysteinyl-tRNA(Cys) + AMP + diphosphate. The protein is Cysteine--tRNA ligase of Aliivibrio salmonicida (strain LFI1238) (Vibrio salmonicida (strain LFI1238)).